A 687-amino-acid chain; its full sequence is Acetolactate synthase catalytic subunit, mitochondrial (687 aa).

The transit peptide at 1–90 (MIRQSTLKNF…AEPDMDTSFV (90 aa)) directs the protein to the mitochondrion. The span at 43 to 52 (YYSASPLPAS) shows a compositional bias: low complexity. Positions 43–68 (YYSASPLPASKRPEPAPSFNVDPLEQ) are disordered. Position 139 (glutamate 139) interacts with thiamine diphosphate. FAD contacts are provided by residues arginine 241, 355-376 (HGCA…VGAR), and 407-426 (EVSP…VEGD). Residues 499–579 (QHQMWAAQHW…VKILILNNEE (81 aa)) are thiamine pyrophosphate binding. 3 residues coordinate Mg(2+): aspartate 550, asparagine 577, and glutamate 579.

The protein belongs to the TPP enzyme family. Homodimer. The acetolactate synthase complex contains the catalytic subunit ILV2 and the regulatory small subunit ILV6. Mg(2+) serves as cofactor. It depends on thiamine diphosphate as a cofactor.

It is found in the mitochondrion. It catalyses the reaction 2 pyruvate + H(+) = (2S)-2-acetolactate + CO2. The catalysed reaction is 2-oxobutanoate + pyruvate + H(+) = (S)-2-ethyl-2-hydroxy-3-oxobutanoate + CO2. It participates in amino-acid biosynthesis; L-isoleucine biosynthesis; L-isoleucine from 2-oxobutanoate: step 1/4. The protein operates within amino-acid biosynthesis; L-valine biosynthesis; L-valine from pyruvate: step 1/4. Its activity is regulated as follows. The regulatory subunit ILV6 stimulates enzymatic activity seven- to tenfold and confers sensitivity to inhibition by valine and activation by ATP. Functionally, catalytic subunit of mitochondrial acetolactate synthase, which catalyzes the first of a series of common steps in the biosynthesis of the branched-chain amino acids. Catalyzes the irreversible decarboxylation of pyruvate to a bound hydroxyethyl group that then condenses with either a second pyruvate molecule to form 2-acetolactate (AL) or with 2-ketobutyrate to form 2-aceto-2-hydroxybutyrate (AHB). The first product is the precursor for valine and leucine biosynthesis, while the second leads to isoleucine. This Saccharomyces cerevisiae (strain ATCC 204508 / S288c) (Baker's yeast) protein is Acetolactate synthase catalytic subunit, mitochondrial (ILV2).